A 381-amino-acid chain; its full sequence is Anhydro-N-acetylmuramic acid kinase (381 aa).

22–29 (GTSIDGID) is an ATP binding site.

The protein belongs to the anhydro-N-acetylmuramic acid kinase family.

The enzyme catalyses 1,6-anhydro-N-acetyl-beta-muramate + ATP + H2O = N-acetyl-D-muramate 6-phosphate + ADP + H(+). Its pathway is amino-sugar metabolism; 1,6-anhydro-N-acetylmuramate degradation. The protein operates within cell wall biogenesis; peptidoglycan recycling. Its function is as follows. Catalyzes the specific phosphorylation of 1,6-anhydro-N-acetylmuramic acid (anhMurNAc) with the simultaneous cleavage of the 1,6-anhydro ring, generating MurNAc-6-P. Is required for the utilization of anhMurNAc either imported from the medium or derived from its own cell wall murein, and thus plays a role in cell wall recycling. The protein is Anhydro-N-acetylmuramic acid kinase of Xylella fastidiosa (strain Temecula1 / ATCC 700964).